The sequence spans 638 residues: Stress-activated protein kinase alpha (638 aa).

ANK repeat units lie at residues 43 to 72, 80 to 109, 113 to 146, 150 to 181, 185 to 214, and 219 to 248; these read YGQS…TLKA, NGFS…NVDV, DLNT…NVNA, NGET…NVNL, FQES…DVDC, and ERKT…LFDW. Positions 240–303 constitute an SAM domain; it reads KKYKDLFDWL…LKETSNLANE (64 aa). A Protein kinase domain is found at 351–620; it reads LEYTEKLGAG…RLVTIENEYR (270 aa). ATP is bound by residues 357–365 and Lys-378; that span reads LGAGSSGKV. Asp-472 functions as the Proton acceptor in the catalytic mechanism.

The protein belongs to the protein kinase superfamily. TKL Ser/Thr protein kinase family. Interacts with F-actin. Post-translationally, autophosphorylated.

It is found in the cytoplasm. It localises to the cytoskeleton. The catalysed reaction is L-seryl-[protein] + ATP = O-phospho-L-seryl-[protein] + ADP + H(+). It carries out the reaction L-threonyl-[protein] + ATP = O-phospho-L-threonyl-[protein] + ADP + H(+). May be involved in cortical F-actin organization and resistance to osmotic stress. Activated upon cell detachment, in vitro. This Dictyostelium discoideum (Social amoeba) protein is Stress-activated protein kinase alpha (spkA-1).